The sequence spans 361 residues: MALTRLLIKDFRNIESADLALAAGFNFLVGPNGSGKTSVLEAVYTLGHGRAFRSLQAGRVIRHECAEFVLHGRVDANEREASVGLSKSRQGDTKVRIDGTDGHKVAELAQMLPMQLITPEGFTLLNGGPKFRRAFLDWGCFHNEPGFFTAWSNLKRLLKQRNAALRQVSRYTQIRAWDQEIIPLAERISEWRAAYSDAIAADISATCALFLPEFALSFSFQRGWDKESDYGELLARQFERDRALTYTAVGPHKADFRIRADGTPVEDLLSRGQLKLLMCALRLAQGEFLTRQSGRRCLYLLDDFASELDTGRRRLLAERLKATQAQVFVSAVSAEQVADMVGEKGKMFRVEHGKIEVQPQD.

30-37 lines the ATP pocket; that stretch reads GPNGSGKT.

It belongs to the RecF family.

The protein localises to the cytoplasm. The RecF protein is involved in DNA metabolism; it is required for DNA replication and normal SOS inducibility. RecF binds preferentially to single-stranded, linear DNA. It also seems to bind ATP. This is DNA replication and repair protein RecF from Yersinia pestis.